We begin with the raw amino-acid sequence, 550 residues long: Homeobox and leucine zipper protein Homez (550 aa).

Positions 1–10 are enriched in pro residues; the sequence is MVRGWEPPPG. A disordered region spans residues 1–36; sequence MVRGWEPPPGLDCAISEGHKSEGTMPPNKEASGLSS. The segment at residues 55–114 is a DNA-binding region (homeobox 1); that stretch reads WTQAAQTSELDSNEHLLKTFSYFPYPSLADIALLCLRYGLQMEKVKTWFMAQRLRCGISW. The tract at residues 168 to 199 is disordered; that stretch reads GPPTLSKPTQTKGLKVEPEEPSQMPPLPQSHQ. Glycyl lysine isopeptide (Lys-Gly) (interchain with G-Cter in SUMO2) cross-links involve residues lysine 182, lysine 200, and lysine 202. Residues 223–265 form a disordered region; the sequence is LQSSGLSKEQAGRGPNQSHGIGTASWNHSTTVPQPQARDKPPP. Polar residues predominate over residues 237 to 256; sequence PNQSHGIGTASWNHSTTVPQ. A Phosphoserine modification is found at serine 351. DNA-binding regions (homeobox) lie at residues 355–415 and 451–510; these read QRQR…KHGQ and TPPL…AEVV. The Nuclear localization signal motif lies at 358–363; the sequence is RKTKRK. Disordered stretches follow at residues 424 to 465 and 512 to 550; these read VPGA…DIQP and CLDE…IIQD. Phosphothreonine is present on threonine 451. Over residues 452-463 the composition is skewed to pro residues; sequence PPLPIPPPPPDI. Acidic residues predominate over residues 513 to 550; that stretch reads LDEEEEEEEEELPEDDEEEEEEEEEDDDDDDDDVIIQD.

In terms of assembly, homodimer or heterodimer (Potential). Interacts with HOXC8. Ubiquitous. Strongly expressed in adult testis and kidney as well as fetal lung and kidney.

The protein localises to the nucleus. Functionally, may function as a transcriptional regulator. This chain is Homeobox and leucine zipper protein Homez (HOMEZ), found in Homo sapiens (Human).